Consider the following 219-residue polypeptide: Large ribosomal subunit protein uL3 (219 aa).

2 disordered regions span residues D62–G81 and Q136–M156.

Belongs to the universal ribosomal protein uL3 family. As to quaternary structure, part of the 50S ribosomal subunit. Forms a cluster with proteins L14 and L19.

In terms of biological role, one of the primary rRNA binding proteins, it binds directly near the 3'-end of the 23S rRNA, where it nucleates assembly of the 50S subunit. The polypeptide is Large ribosomal subunit protein uL3 (Staphylococcus saprophyticus subsp. saprophyticus (strain ATCC 15305 / DSM 20229 / NCIMB 8711 / NCTC 7292 / S-41)).